Reading from the N-terminus, the 393-residue chain is NADH-quinone oxidoreductase subunit D (393 aa).

This sequence belongs to the complex I 49 kDa subunit family. NDH-1 is composed of 14 different subunits. Subunits NuoB, C, D, E, F, and G constitute the peripheral sector of the complex.

It is found in the cell inner membrane. The catalysed reaction is a quinone + NADH + 5 H(+)(in) = a quinol + NAD(+) + 4 H(+)(out). Functionally, NDH-1 shuttles electrons from NADH, via FMN and iron-sulfur (Fe-S) centers, to quinones in the respiratory chain. The immediate electron acceptor for the enzyme in this species is believed to be ubiquinone. Couples the redox reaction to proton translocation (for every two electrons transferred, four hydrogen ions are translocated across the cytoplasmic membrane), and thus conserves the redox energy in a proton gradient. This is NADH-quinone oxidoreductase subunit D from Ehrlichia chaffeensis (strain ATCC CRL-10679 / Arkansas).